Consider the following 238-residue polypeptide: Uridylate kinase (238 aa).

An ATP-binding site is contributed by 12-15; it reads KLSG. G54 lines the UMP pocket. Residues G55 and R59 each coordinate ATP. UMP-binding positions include D74 and 135–142; that span reads TGNPFFTT. Positions 162, 168, and 171 each coordinate ATP.

Belongs to the UMP kinase family. As to quaternary structure, homohexamer.

It is found in the cytoplasm. It catalyses the reaction UMP + ATP = UDP + ADP. It functions in the pathway pyrimidine metabolism; CTP biosynthesis via de novo pathway; UDP from UMP (UMPK route): step 1/1. With respect to regulation, inhibited by UTP. Functionally, catalyzes the reversible phosphorylation of UMP to UDP. This chain is Uridylate kinase, found in Bordetella parapertussis (strain 12822 / ATCC BAA-587 / NCTC 13253).